A 122-amino-acid polypeptide reads, in one-letter code: Large ribosomal subunit protein uL14c (122 aa).

Belongs to the universal ribosomal protein uL14 family. As to quaternary structure, part of the 50S ribosomal subunit.

Its subcellular location is the plastid. It localises to the chloroplast. Functionally, binds to 23S rRNA. In Nicotiana tomentosiformis (Tobacco), this protein is Large ribosomal subunit protein uL14c.